We begin with the raw amino-acid sequence, 30 residues long: Sperm protamine P5 (30 aa).

The segment at 1-30 (YRRRRRRGRRGRRRRGRRRRSRGRRRAHGG) is disordered.

As to expression, testis.

It localises to the nucleus. The protein localises to the chromosome. Functionally, protamines substitute for histones in the chromatin of sperm during the haploid phase of spermatogenesis. They compact sperm DNA into a highly condensed, stable and inactive complex. The polypeptide is Sperm protamine P5 (Octopus vulgaris (Common octopus)).